The primary structure comprises 94 residues: Co-chaperonin GroES (94 aa).

This sequence belongs to the GroES chaperonin family. In terms of assembly, heptamer of 7 subunits arranged in a ring. Interacts with the chaperonin GroEL.

Its subcellular location is the cytoplasm. Together with the chaperonin GroEL, plays an essential role in assisting protein folding. The GroEL-GroES system forms a nano-cage that allows encapsulation of the non-native substrate proteins and provides a physical environment optimized to promote and accelerate protein folding. GroES binds to the apical surface of the GroEL ring, thereby capping the opening of the GroEL channel. The protein is Co-chaperonin GroES of Tetragenococcus halophilus (Pediococcus halophilus).